The following is a 302-amino-acid chain: Genome polyprotein (302 aa).

A compositionally biased stretch (basic and acidic residues) spans 28-46; the sequence is ENLDTGKDSKKDTSGKGDK. The disordered stretch occupies residues 28 to 72; that stretch reads ENLDTGKDSKKDTSGKGDKPQNSQTGQGSKEQTKIGTVSKDVNVG. Residues 47–63 are compositionally biased toward polar residues; the sequence is PQNSQTGQGSKEQTKIG.

This sequence belongs to the potyviridae genome polyprotein family. In terms of processing, genome polyprotein of potyviruses undergoes post-translational proteolytic processing by the main proteinase NIa-pro resulting in the production of at least ten individual proteins. The P1 proteinase and the HC-pro cleave only their respective C-termini autocatalytically. 6K1 is essential for proper proteolytic separation of P3 from CI.

It localises to the virion. It catalyses the reaction RNA(n) + a ribonucleoside 5'-triphosphate = RNA(n+1) + diphosphate. Its function is as follows. An RNA-dependent RNA polymerase that plays an essential role in the virus replication. Functionally, involved in aphid transmission, cell-to-cell and systemis movement, encapsidation of the viral RNA and in the regulation of viral RNA amplification. This Watermelon mosaic virus II (isolate Australia) protein is Genome polyprotein.